A 148-amino-acid polypeptide reads, in one-letter code: Putative HTH-type transcriptional regulator NMA1593 (148 aa).

Residues 2 to 131 (RLTTKGRFAV…GSVTLQSIIE (130 aa)) enclose the HTH rrf2-type domain.

The polypeptide is Putative HTH-type transcriptional regulator NMA1593 (Neisseria meningitidis serogroup A / serotype 4A (strain DSM 15465 / Z2491)).